The primary structure comprises 273 residues: Urease accessory protein UreD (273 aa).

It belongs to the UreD family. In terms of assembly, ureD, UreF and UreG form a complex that acts as a GTP-hydrolysis-dependent molecular chaperone, activating the urease apoprotein by helping to assemble the nickel containing metallocenter of UreC. The UreE protein probably delivers the nickel.

It is found in the cytoplasm. Required for maturation of urease via the functional incorporation of the urease nickel metallocenter. This chain is Urease accessory protein UreD, found in Mycolicibacterium gilvum (strain PYR-GCK) (Mycobacterium gilvum (strain PYR-GCK)).